We begin with the raw amino-acid sequence, 223 residues long: Putative 3-methyladenine DNA glycosylase (223 aa).

The protein belongs to the DNA glycosylase MPG family.

The sequence is that of Putative 3-methyladenine DNA glycosylase from Rhodococcus jostii (strain RHA1).